Here is a 297-residue protein sequence, read N- to C-terminus: Myozenin-1 (297 aa).

The segment at 1-34 (MPLSGTPAPNKKRKSSKLIMELTGGGQESSGLNL) is disordered. Serine 82 is modified (phosphoserine). The interval 105–172 (FSYSKSSGGG…ALPDNQAGGE (68 aa)) is disordered. Positions 118-128 (RSGSAGQYGSD) are enriched in low complexity. Residues 136–162 (SGSGSGSGSGPGSGGAGGPGGHSGRGG) are compositionally biased toward gly residues.

It belongs to the myozenin family. Interacts with ACTN2, ACTN3, FLNA, FLNB, FLNC, LDB3, PPP3CA and TCAP. Interacts via its C-terminal region with MYOT.

It localises to the nucleus. The protein resides in the cell projection. Its subcellular location is the pseudopodium. Functionally, myozenins may serve as intracellular binding proteins involved in linking Z-disk proteins such as alpha-actinin, gamma-filamin, TCAP/telethonin, LDB3/ZASP and localizing calcineurin signaling to the sarcomere. Plays an important role in the modulation of calcineurin signaling. May play a role in myofibrillogenesis. The polypeptide is Myozenin-1 (MYOZ1) (Bos taurus (Bovine)).